The primary structure comprises 89 residues: Small ribosomal subunit protein uS15 (89 aa).

Positions 1–21 are enriched in basic and acidic residues; it reads MVLDPTQKKSVIDAHAKHEGD. A disordered region spans residues 1-24; the sequence is MVLDPTQKKSVIDAHAKHEGDTGS.

Belongs to the universal ribosomal protein uS15 family. As to quaternary structure, part of the 30S ribosomal subunit. Forms a bridge to the 50S subunit in the 70S ribosome, contacting the 23S rRNA.

In terms of biological role, one of the primary rRNA binding proteins, it binds directly to 16S rRNA where it helps nucleate assembly of the platform of the 30S subunit by binding and bridging several RNA helices of the 16S rRNA. Functionally, forms an intersubunit bridge (bridge B4) with the 23S rRNA of the 50S subunit in the ribosome. The sequence is that of Small ribosomal subunit protein uS15 from Desulfovibrio desulfuricans (strain ATCC 27774 / DSM 6949 / MB).